A 154-amino-acid chain; its full sequence is Ribonuclease 8 (154 aa).

The N-terminal stretch at 1–27 (MAPARAGCCALLLLLLGLWVAEIPVSA) is a signal peptide. The active-site Proton acceptor is the His-42. Intrachain disulfides connect Cys-64–Cys-118, Cys-82–Cys-133, and Cys-89–Cys-96. Substrate contacts are provided by residues 65 to 69 (KDLNT) and Lys-90. His-149 serves as the catalytic Proton donor.

This sequence belongs to the pancreatic ribonuclease family.

The protein resides in the secreted. Functionally, has a low ribonuclease activity. This is Ribonuclease 8 (RNASE8) from Pongo pygmaeus (Bornean orangutan).